Here is a 43-residue protein sequence, read N- to C-terminus: Photosystem II reaction center protein Psb30 (43 aa).

A helical transmembrane segment spans residues 15-35; that stretch reads VIFQLTFVSLILISGPVVIFL.

Belongs to the Psb30/Ycf12 family. PSII is composed of 1 copy each of membrane proteins PsbA, PsbB, PsbC, PsbD, PsbE, PsbF, PsbH, PsbI, PsbJ, PsbK, PsbL, PsbM, PsbT, PsbX, PsbY, PsbZ, Psb30/Ycf12, peripheral proteins PsbO, CyanoQ (PsbQ), PsbU, PsbV and a large number of cofactors. It forms dimeric complexes.

Its subcellular location is the cellular thylakoid membrane. In terms of biological role, a core subunit of photosystem II (PSII), probably helps stabilize the reaction center. In Picosynechococcus sp. (strain ATCC 27264 / PCC 7002 / PR-6) (Agmenellum quadruplicatum), this protein is Photosystem II reaction center protein Psb30.